The following is a 1417-amino-acid chain: DNA-directed RNA polymerase subunit beta' (1417 aa).

Positions 68, 70, 83, and 86 each coordinate Zn(2+). Positions 458, 460, and 462 each coordinate Mg(2+). Residues Cys-811, Cys-884, Cys-891, and Cys-894 each contribute to the Zn(2+) site.

This sequence belongs to the RNA polymerase beta' chain family. As to quaternary structure, the RNAP catalytic core consists of 2 alpha, 1 beta, 1 beta' and 1 omega subunit. When a sigma factor is associated with the core the holoenzyme is formed, which can initiate transcription. Requires Mg(2+) as cofactor. It depends on Zn(2+) as a cofactor.

It catalyses the reaction RNA(n) + a ribonucleoside 5'-triphosphate = RNA(n+1) + diphosphate. Functionally, DNA-dependent RNA polymerase catalyzes the transcription of DNA into RNA using the four ribonucleoside triphosphates as substrates. In Francisella tularensis subsp. novicida (strain U112), this protein is DNA-directed RNA polymerase subunit beta'.